The sequence spans 470 residues: Acetyl-CoA decarbonylase/synthase complex subunit beta 2 (470 aa).

Residues Cys190, Cys193, Cys279, and Cys281 each coordinate [Ni-Fe-S] cluster.

This sequence belongs to the CdhC family. As to quaternary structure, monomer. The ACDS complex is made up of alpha, epsilon, beta, gamma and delta chains with a probable stoichiometry of (alpha(2)epsilon(2))(4)-beta(8)-(gamma(1)delta(1))(8) (Potential). [Ni-Fe-S] cluster is required as a cofactor.

It catalyses the reaction Co(I)-[corrinoid Fe-S protein] + acetyl-CoA + H(+) = methyl-Co(III)-[corrinoid Fe-S protein] + CO + CoA. The protein operates within one-carbon metabolism; methanogenesis from acetate. Functionally, part of a complex that catalyzes the reversible cleavage of acetyl-CoA, allowing growth on acetate as sole source of carbon and energy. The alpha-epsilon complex generates CO from CO(2), while the beta subunit (this protein) combines the CO with CoA and a methyl group to form acetyl-CoA. The methyl group, which is incorporated into acetyl-CoA, is transferred to the beta subunit by a corrinoid iron-sulfur protein (the gamma-delta complex). In Methanosarcina mazei (strain ATCC BAA-159 / DSM 3647 / Goe1 / Go1 / JCM 11833 / OCM 88) (Methanosarcina frisia), this protein is Acetyl-CoA decarbonylase/synthase complex subunit beta 2 (cdhC2).